Consider the following 380-residue polypeptide: Cytochrome b (380 aa).

4 helical membrane-spanning segments follow: residues 34–54, 78–99, 114–134, and 179–199; these read FGSLLGICLMTQILTGLLLAM, WLIRNLHANGASLFFICIYLHI, WNTGVILLLTLMATAFVGYVL, and FFALHFLLPFIIAGLTLIHLT. Histidine 84 and histidine 98 together coordinate heme b. Histidine 183 and histidine 197 together coordinate heme b. A ubiquinone is bound at residue histidine 202. The next 4 membrane-spanning stretches (helical) occupy residues 227–247, 289–309, 321–341, and 348–368; these read TKDILGFIILLLPLMTLAMFA, LGGVLALAASVLVLFLAPFLH, LSQLLFWTLVANLFILTWIGS, and FIITGQLASLTYFTILLILFP.

It belongs to the cytochrome b family. The cytochrome bc1 complex contains 11 subunits: 3 respiratory subunits (MT-CYB, CYC1 and UQCRFS1), 2 core proteins (UQCRC1 and UQCRC2) and 6 low-molecular weight proteins (UQCRH/QCR6, UQCRB/QCR7, UQCRQ/QCR8, UQCR10/QCR9, UQCR11/QCR10 and a cleavage product of UQCRFS1). This cytochrome bc1 complex then forms a dimer. Heme b is required as a cofactor.

It localises to the mitochondrion inner membrane. Its function is as follows. Component of the ubiquinol-cytochrome c reductase complex (complex III or cytochrome b-c1 complex) that is part of the mitochondrial respiratory chain. The b-c1 complex mediates electron transfer from ubiquinol to cytochrome c. Contributes to the generation of a proton gradient across the mitochondrial membrane that is then used for ATP synthesis. The sequence is that of Cytochrome b (MT-CYB) from Aphanotriccus audax (Black-billed flycatcher).